Reading from the N-terminus, the 149-residue chain is D-aminoacyl-tRNA deacylase (149 aa).

The short motif at 137 to 138 is the Gly-cisPro motif, important for rejection of L-amino acids element; it reads GP.

The protein belongs to the DTD family. As to quaternary structure, homodimer.

It localises to the cytoplasm. The enzyme catalyses glycyl-tRNA(Ala) + H2O = tRNA(Ala) + glycine + H(+). The catalysed reaction is a D-aminoacyl-tRNA + H2O = a tRNA + a D-alpha-amino acid + H(+). In terms of biological role, an aminoacyl-tRNA editing enzyme that deacylates mischarged D-aminoacyl-tRNAs. Also deacylates mischarged glycyl-tRNA(Ala), protecting cells against glycine mischarging by AlaRS. Acts via tRNA-based rather than protein-based catalysis; rejects L-amino acids rather than detecting D-amino acids in the active site. By recycling D-aminoacyl-tRNA to D-amino acids and free tRNA molecules, this enzyme counteracts the toxicity associated with the formation of D-aminoacyl-tRNA entities in vivo and helps enforce protein L-homochirality. In Clostridium tetani (strain Massachusetts / E88), this protein is D-aminoacyl-tRNA deacylase.